The chain runs to 249 residues: Metallo-beta-lactamase type 2 (249 aa).

Residues 1–22 (MLKRLKGLLVLALGFTGLQVFG) form the signal peptide. The Zn(2+) site is built by histidine 98, histidine 100, aspartate 102, histidine 161, and cysteine 180. Lysine 183 lines the substrate pocket. Position 222 (histidine 222) interacts with Zn(2+).

Belongs to the metallo-beta-lactamase superfamily. Class-B beta-lactamase family. Monomer. It depends on Zn(2+) as a cofactor.

Its subcellular location is the periplasm. The enzyme catalyses a beta-lactam + H2O = a substituted beta-amino acid. Its function is as follows. Confers resistance to the different beta-lactams antibiotics (penicillin, cephalosporin and carbapenem) via the hydrolysis of the beta-lactam ring. The protein is Metallo-beta-lactamase type 2 (blaB5) of Elizabethkingia meningoseptica (Chryseobacterium meningosepticum).